The primary structure comprises 289 residues: 3-methyl-2-oxobutanoate hydroxymethyltransferase (289 aa).

Over residues 1 to 15 the composition is skewed to polar residues; the sequence is MSTTFKLDTSTSRAN. The disordered stretch occupies residues 1–21; sequence MSTTFKLDTSTSRANPTPAPM. Residues Asp-67 and Asp-106 each contribute to the Mg(2+) site. Residues 67-68, Asp-106, and Lys-136 contribute to the 3-methyl-2-oxobutanoate site; that span reads DS. Glu-138 is a Mg(2+) binding site. Glu-205 functions as the Proton acceptor in the catalytic mechanism.

Belongs to the PanB family. As to quaternary structure, homodecamer; pentamer of dimers. Mg(2+) serves as cofactor.

It localises to the cytoplasm. The enzyme catalyses 3-methyl-2-oxobutanoate + (6R)-5,10-methylene-5,6,7,8-tetrahydrofolate + H2O = 2-dehydropantoate + (6S)-5,6,7,8-tetrahydrofolate. The protein operates within cofactor biosynthesis; (R)-pantothenate biosynthesis; (R)-pantoate from 3-methyl-2-oxobutanoate: step 1/2. Catalyzes the reversible reaction in which hydroxymethyl group from 5,10-methylenetetrahydrofolate is transferred onto alpha-ketoisovalerate to form ketopantoate. The chain is 3-methyl-2-oxobutanoate hydroxymethyltransferase from Erythrobacter litoralis (strain HTCC2594).